The sequence spans 348 residues: GTP 3',8-cyclase (348 aa).

Residues 24 to 242 (PFGRAVTYLR…EKQFTLTDID (219 aa)) enclose the Radical SAM core domain. Arg33 contributes to the GTP binding site. Residues Cys40 and Cys44 each contribute to the [4Fe-4S] cluster site. Tyr46 is a binding site for S-adenosyl-L-methionine. Cys47 provides a ligand contact to [4Fe-4S] cluster. Arg82 is a GTP binding site. Gly86 contributes to the S-adenosyl-L-methionine binding site. Thr115 is a binding site for GTP. Residue Ser139 participates in S-adenosyl-L-methionine binding. Lys175 serves as a coordination point for GTP. Position 209 (Met209) interacts with S-adenosyl-L-methionine. Residues Cys272 and Cys275 each coordinate [4Fe-4S] cluster. 277 to 279 (RVR) contacts GTP. Cys289 serves as a coordination point for [4Fe-4S] cluster.

This sequence belongs to the radical SAM superfamily. MoaA family. In terms of assembly, monomer and homodimer. It depends on [4Fe-4S] cluster as a cofactor.

It catalyses the reaction GTP + AH2 + S-adenosyl-L-methionine = (8S)-3',8-cyclo-7,8-dihydroguanosine 5'-triphosphate + 5'-deoxyadenosine + L-methionine + A + H(+). The protein operates within cofactor biosynthesis; molybdopterin biosynthesis. Its function is as follows. Catalyzes the cyclization of GTP to (8S)-3',8-cyclo-7,8-dihydroguanosine 5'-triphosphate. The sequence is that of GTP 3',8-cyclase from Rhizobium leguminosarum bv. trifolii (strain WSM2304).